A 781-amino-acid polypeptide reads, in one-letter code: DNA translocase FtsK 2 (781 aa).

4 helical membrane-spanning segments follow: residues 24–44 (LLGEVRWFLLLAVTIAFLTIL), 74–94 (FADVLLFVFGASAYWWALLLL), 120–140 (AGVTWFGFALILSASMGLEAI), and 170–190 (GFTGGTLLLLLMFTVGLSLFF). Over 191-781 (HFSWLNLAEQ…NRNGNVVEEE (591 aa)) the chain is Cytoplasmic. The FtsK domain occupies 414-623 (GKPVVADLAK…FQVSSKIDSR (210 aa)). Residue 434–439 (GSGKSV) participates in ATP binding.

The protein belongs to the FtsK/SpoIIIE/SftA family. In terms of assembly, homohexamer. Forms a ring that surrounds DNA.

It is found in the cell inner membrane. Its function is as follows. Essential cell division protein that coordinates cell division and chromosome segregation. The N-terminus is involved in assembly of the cell-division machinery. The C-terminus functions as a DNA motor that moves dsDNA in an ATP-dependent manner towards the dif recombination site, which is located within the replication terminus region. Translocation stops specifically at Xer-dif sites, where FtsK interacts with the Xer recombinase, allowing activation of chromosome unlinking by recombination. FtsK orienting polar sequences (KOPS) guide the direction of DNA translocation. FtsK can remove proteins from DNA as it translocates, but translocation stops specifically at XerCD-dif site, thereby preventing removal of XerC and XerD from dif. This is DNA translocase FtsK 2 (ftsK2) from Ralstonia nicotianae (strain ATCC BAA-1114 / GMI1000) (Ralstonia solanacearum).